The sequence spans 83 residues: U15-theraphotoxin-Cg1a (83 aa).

The first 21 residues, 1–21 (MKAAILLAFAGLALLSVICHA), serve as a signal peptide directing secretion. Positions 22 to 49 (SENVEQDSFEEVFSAIFAMEDDLKPKER) are excised as a propeptide. 3 cysteine pairs are disulfide-bonded: Cys51-Cys66, Cys58-Cys71, and Cys65-Cys77. Ala81 is modified (alanine amide).

It belongs to the neurotoxin 10 (Hwtx-1) family. 66 (Jztx-24) subfamily. As to expression, expressed by the venom gland.

It localises to the secreted. Its function is as follows. Probable ion channel inhibitor. This is U15-theraphotoxin-Cg1a from Chilobrachys guangxiensis (Chinese earth tiger tarantula).